The chain runs to 92 residues: Small ribosomal subunit protein uS19 (92 aa).

The protein belongs to the universal ribosomal protein uS19 family.

Its function is as follows. Protein S19 forms a complex with S13 that binds strongly to the 16S ribosomal RNA. The polypeptide is Small ribosomal subunit protein uS19 (Mycoplasmopsis agalactiae (strain NCTC 10123 / CIP 59.7 / PG2) (Mycoplasma agalactiae)).